The chain runs to 534 residues: Chaperonin GroEL 3 (534 aa).

ATP-binding positions include 31–34, G416, 479–481, and D495; these read TLGP and NAL.

Belongs to the chaperonin (HSP60) family. As to quaternary structure, forms a cylinder of 14 subunits composed of two heptameric rings stacked back-to-back. Interacts with the co-chaperonin GroES.

Its subcellular location is the cytoplasm. The catalysed reaction is ATP + H2O + a folded polypeptide = ADP + phosphate + an unfolded polypeptide.. Together with its co-chaperonin GroES, plays an essential role in assisting protein folding. The GroEL-GroES system forms a nano-cage that allows encapsulation of the non-native substrate proteins and provides a physical environment optimized to promote and accelerate protein folding. In Protochlamydia amoebophila (strain UWE25), this protein is Chaperonin GroEL 3.